We begin with the raw amino-acid sequence, 638 residues long: 2-isopropylmalate synthase (638 aa).

Residues 72-346 form the Pyruvate carboxyltransferase domain; that stretch reads PRWCSVDLRD…DPQLDLSNVP (275 aa). Mg(2+) contacts are provided by aspartate 81, histidine 285, histidine 287, and asparagine 321. A regulatory domain region spans residues 488–638; that stretch reads VEQSGMTAAG…SAINRSQRQR (151 aa).

This sequence belongs to the alpha-IPM synthase/homocitrate synthase family. LeuA type 2 subfamily. Homodimer. It depends on Mg(2+) as a cofactor.

It is found in the cytoplasm. The catalysed reaction is 3-methyl-2-oxobutanoate + acetyl-CoA + H2O = (2S)-2-isopropylmalate + CoA + H(+). It functions in the pathway amino-acid biosynthesis; L-leucine biosynthesis; L-leucine from 3-methyl-2-oxobutanoate: step 1/4. Functionally, catalyzes the condensation of the acetyl group of acetyl-CoA with 3-methyl-2-oxobutanoate (2-ketoisovalerate) to form 3-carboxy-3-hydroxy-4-methylpentanoate (2-isopropylmalate). In Bifidobacterium longum subsp. infantis (strain ATCC 15697 / DSM 20088 / JCM 1222 / NCTC 11817 / S12), this protein is 2-isopropylmalate synthase.